The sequence spans 447 residues: Serine/threonine-protein kinase NLK2 (447 aa).

The Protein kinase domain maps to 60–349; it reads PEPDRPIGYG…AKDALAHPYL (290 aa). Residues 66–74 and Lys-89 each bind ATP; that span reads IGYGAFGVV. Asp-186 (proton acceptor) is an active-site residue.

This sequence belongs to the protein kinase superfamily. CMGC Ser/Thr protein kinase family. MAP kinase subfamily. As to quaternary structure, interacts with sox11, hmgxb4/hmg2l1, rnf138/narf, stat3.1 and mef2a. Mg(2+) serves as cofactor. Expressed widely in the ectoderm during early gastrula stage when neural induction is taking place. Expressed in the head region of neurula stage embryos. At the end of neurulation, expression becomes localized to the nervous system, and is restricted to the central nervous system, eye and head neural crest cells by the early tadpole stages.

The protein localises to the nucleus. It localises to the cytoplasm. It carries out the reaction L-seryl-[protein] + ATP = O-phospho-L-seryl-[protein] + ADP + H(+). The catalysed reaction is L-threonyl-[protein] + ATP = O-phospho-L-threonyl-[protein] + ADP + H(+). Activated by tyrosine and threonine phosphorylation. Negatively regulates Wnt/beta-catenin-signaling during development. Plays a role together with sox11 in neural induction during early embryogenesis. Involved in TGFbeta-mediated mesoderm induction in early embryos, acting downstream of map3k7/tak1 to phosphorylate stat3.1. Augments the rnf138/narf-directed ubiquitination and degradation of tcf/lef by enhancing the association of rnf138/narf and tcf/lef. Phosphorylates mef2a to play a role in anterior neural development, including eye formation. This is Serine/threonine-protein kinase NLK2 (nlk.2) from Xenopus laevis (African clawed frog).